The primary structure comprises 772 residues: Phosphoribosylformylglycinamidine synthase subunit PurL (772 aa).

The active site involves His-62. The ATP site is built by Tyr-65 and Lys-109. Glu-111 serves as a coordination point for Mg(2+). Substrate is bound by residues 112–115 and Arg-134; that span reads SHNH. The active-site Proton acceptor is His-113. Asp-135 contacts Mg(2+). Gln-259 contacts substrate. A Mg(2+)-binding site is contributed by Asp-287. Substrate is bound at residue 331–333; sequence ESQ. Positions 519 and 556 each coordinate ATP. Asn-557 contacts Mg(2+). Ser-559 is a substrate binding site.

This sequence belongs to the FGAMS family. As to quaternary structure, monomer. Part of the FGAM synthase complex composed of 1 PurL, 1 PurQ and 2 PurS subunits.

It localises to the cytoplasm. The catalysed reaction is N(2)-formyl-N(1)-(5-phospho-beta-D-ribosyl)glycinamide + L-glutamine + ATP + H2O = 2-formamido-N(1)-(5-O-phospho-beta-D-ribosyl)acetamidine + L-glutamate + ADP + phosphate + H(+). It functions in the pathway purine metabolism; IMP biosynthesis via de novo pathway; 5-amino-1-(5-phospho-D-ribosyl)imidazole from N(2)-formyl-N(1)-(5-phospho-D-ribosyl)glycinamide: step 1/2. Functionally, part of the phosphoribosylformylglycinamidine synthase complex involved in the purines biosynthetic pathway. Catalyzes the ATP-dependent conversion of formylglycinamide ribonucleotide (FGAR) and glutamine to yield formylglycinamidine ribonucleotide (FGAM) and glutamate. The FGAM synthase complex is composed of three subunits. PurQ produces an ammonia molecule by converting glutamine to glutamate. PurL transfers the ammonia molecule to FGAR to form FGAM in an ATP-dependent manner. PurS interacts with PurQ and PurL and is thought to assist in the transfer of the ammonia molecule from PurQ to PurL. This Leifsonia xyli subsp. xyli (strain CTCB07) protein is Phosphoribosylformylglycinamidine synthase subunit PurL.